Consider the following 167-residue polypeptide: uncharacterized protein (167 aa).

4 helical membrane passes run L13–I33, V37–Y57, W61–E81, and L103–S123.

The protein localises to the cell membrane. This is an uncharacterized protein from Haemophilus influenzae (strain ATCC 51907 / DSM 11121 / KW20 / Rd).